The primary structure comprises 148 residues: Large ribosomal subunit protein eL19 (148 aa).

The segment covering Lys52 to Gly76 has biased composition (basic residues). Residues Lys52–Met95 are disordered.

The protein belongs to the eukaryotic ribosomal protein eL19 family. Part of the 50S ribosomal subunit.

In terms of biological role, binds to the 23S rRNA. The chain is Large ribosomal subunit protein eL19 from Methanothermobacter thermautotrophicus (strain ATCC 29096 / DSM 1053 / JCM 10044 / NBRC 100330 / Delta H) (Methanobacterium thermoautotrophicum).